Consider the following 790-residue polypeptide: MRSVQIFLSQCRLLLLLVPTMLLKSLGEDVIFHPEGEFDSYEVTIPEKLSFRGEVQGVVSPVSYLLQLKGKKHVLHLWPKRLLLPRHLRVFSFTEHGELLEDHPYIPKDCNYMGSVKESLDSKATISTCMGGLRGVFNIDAKHYQIEPLKASPSFEHVVYLLKKEQFGNQVCGLSDDEIEWQMAPYENKARLRDFPGSYKHPKYLELILLFDQSRYRFVNNNLSQVIHDAILLTGIMDTYFQDVRMRIHLKALEVWTDFNKIRVGYPELAEVLGRFVIYKKSVLNARLSSDWAHLYLQRKYNDALAWSFGKVCSLEYAGSVSTLLDTNILAPATWSAHELGHAVGMSHDEQYCQCRGRLNCIMGSGRTGFSNCSYISFFKHISSGATCLNNIPGLGYVLKRCGNKIVEDNEECDCGSTEECQKDRCCQSNCKLQPGANCSIGLCCHDCRFRPSGYVCRQEGNECDLAEYCDGNSSSCPNDVYKQDGTPCKYEGRCFRKGCRSRYMQCQSIFGPDAMEAPSECYDAVNLIGDQFGNCEITGIRNFKKCESANSICGRLQCINVETIPDLPEHTTIISTHLQAENLMCWGTGYHLSMKPMGIPDLGMINDGTSCGEGRVCFKKNCVNSSVLQFDCLPEKCNTRGVCNNRKNCHCMYGWAPPFCEEVGYGGSIDSGPPGLLRGAIPSSIWVVSIIMFRLILLILSVVFVFFRQVIGNHLKPKQEKMPLSKAKTEQEESKTKTVQEESKTKTGQEESEAKTGQEESKAKTGQEESKANIESKRPKAKSVKKQKK.

Positions 1–27 (MRSVQIFLSQCRLLLLLVPTMLLKSLG) are cleaved as a signal peptide. Residues 28–198 (EDVIFHPEGE…KARLRDFPGS (171 aa)) constitute a propeptide that is removed on maturation. A Cysteine switch motif is present at residues 170-177 (QVCGLSDD). A Zn(2+)-binding site is contributed by C172. Residues 199–687 (YKHPKYLELI…LRGAIPSSIW (489 aa)) are Extracellular-facing. Residues 203 to 393 (KYLELILLFD…SGATCLNNIP (191 aa)) form the Peptidase M12B domain. Residue N222 is glycosylated (N-linked (GlcNAc...) asparagine). Cystine bridges form between C313-C388, C353-C373, and C355-C361. H338 is a binding site for Zn(2+). Residue E339 is part of the active site. Zn(2+) contacts are provided by H342 and H348. N-linked (GlcNAc...) asparagine glycosylation is found at N372, N438, N473, and N625. Residues 399–485 (LKRCGNKIVE…SCPNDVYKQD (87 aa)) enclose the Disintegrin domain. The cysteines at positions 457 and 477 are disulfide-linked. Residues 629-663 (LQFDCLPEKCNTRGVCNNRKNCHCMYGWAPPFCEE) enclose the EGF-like domain. 3 disulfide bridges follow: C633–C644, C638–C650, and C652–C661. A helical membrane pass occupies residues 688 to 708 (VVSIIMFRLILLILSVVFVFF). Residues 709–790 (RQVIGNHLKP…KAKSVKKQKK (82 aa)) are Cytoplasmic-facing. Residues 720–779 (QEKMPLSKAKTEQEESKTKTVQEESKTKTGQEESEAKTGQEESKAKTGQEESKANIESKR) are compositionally biased toward basic and acidic residues. A disordered region spans residues 720–790 (QEKMPLSKAK…KAKSVKKQKK (71 aa)). Repeat copies occupy residues 732–740 (QEESKTKTV), 741–749 (QEESKTKTG), 750–758 (QEESEAKTG), 759–767 (QEESKAKTG), and 768–776 (QEESKANIE). Positions 732-776 (QEESKTKTVQEESKTKTGQEESEAKTGQEESKAKTGQEESKANIE) are 5 X 9 AA approximate repeats. A compositionally biased stretch (basic residues) spans 780 to 790 (PKAKSVKKQKK).

In terms of assembly, interacts with CTSD; this leads to activation of CTSD. It depends on Zn(2+) as a cofactor. Expressed in brain neurons (at protein level). Expressed in testis.

Its subcellular location is the late endosome membrane. In terms of biological role, plays a role in lysosomal amyloid precursor protein (APP) processing by cleaving and activating CTSD/cathepsin D which leads to APP degradation. In Homo sapiens (Human), this protein is Disintegrin and metalloproteinase domain-containing protein 30 (ADAM30).